A 138-amino-acid polypeptide reads, in one-letter code: Large ribosomal subunit protein uL16 (138 aa).

Residues 1–19 (MLIPKRVKYRRQHRPHRSG) show a composition bias toward basic residues. The interval 1-24 (MLIPKRVKYRRQHRPHRSGVSKGG) is disordered.

It belongs to the universal ribosomal protein uL16 family. As to quaternary structure, part of the 50S ribosomal subunit.

Binds 23S rRNA and is also seen to make contacts with the A and possibly P site tRNAs. The protein is Large ribosomal subunit protein uL16 of Corynebacterium jeikeium (strain K411).